We begin with the raw amino-acid sequence, 89 residues long: Small ribosomal subunit protein uS15 (89 aa).

Belongs to the universal ribosomal protein uS15 family. As to quaternary structure, part of the 30S ribosomal subunit. Forms a bridge to the 50S subunit in the 70S ribosome, contacting the 23S rRNA.

Functionally, one of the primary rRNA binding proteins, it binds directly to 16S rRNA where it helps nucleate assembly of the platform of the 30S subunit by binding and bridging several RNA helices of the 16S rRNA. In terms of biological role, forms an intersubunit bridge (bridge B4) with the 23S rRNA of the 50S subunit in the ribosome. This chain is Small ribosomal subunit protein uS15, found in Pediococcus pentosaceus (strain ATCC 25745 / CCUG 21536 / LMG 10740 / 183-1w).